We begin with the raw amino-acid sequence, 1369 residues long: Rho-associated protein kinase 1 (1369 aa).

Position 2 is an N-acetylserine (S2). The Protein kinase domain occupies 76–338; it reads YEVVKVIGRG…VEEIKRHLFF (263 aa). ATP is bound by residues 82 to 90 and K105; that span reads IGRGAFGEV. Residue D198 is the Proton acceptor of the active site. In terms of domain architecture, AGC-kinase C-terminal spans 341–409; it reads DQWAWETLRD…YSNRRYLPSA (69 aa). The segment at 368–727 is interaction with FHOD1; that stretch reads FDDLEEDKGD…KKLKEEREAR (360 aa). A coiled-coil region spans residues 422–692; the sequence is KNVQESLQKT…RLEQEVNEHK (271 aa). The 78-residue stretch at 479 to 556 folds into the REM-1 domain; sequence SAVSQIEKEK…LEEANDLLRT (78 aa). Residues 707-946 form an SHROOM3 binding region; it reads EAKSVAMCEM…TVSRLEEANN (240 aa). Positions 949–1015 constitute a RhoBD domain; it reads TKDIELLRKE…LAEIMNRKDF (67 aa). The RHOA binding stretch occupies residues 998 to 1010; sequence LKTQAVNKLAEIM. Positions 1011–1102 form a coiled coil; sequence NRKDFKIDRK…KLLDLSDSTS (92 aa). S1105 and S1108 each carry phosphoserine. The interval 1115 to 1369 is auto-inhibitory; sequence NLPVGSACIP…VVKNTSGKTS (255 aa). One can recognise a PH domain in the interval 1133–1332; that stretch reads SSRIEGWLSV…WVTHLVKKIP (200 aa). Residues 1243-1298 form a Phorbol-ester/DAG-type zinc finger; the sequence is GHEFIPTLYHFPANCEACAKPLWHVFKPPPALECRRCHVKSHRDHLDKKEDLIPPC. S1343 bears the Phosphoserine mark.

The protein belongs to the protein kinase superfamily. AGC Ser/Thr protein kinase family. As to quaternary structure, homodimer. Interacts with GEM, MYLC2B, RHOE, LIMK1, LIMK2, TSG101, CHORDC1, DAPK3, PFN1, PTEN and JIP3. Interacts with FHOD1 in a Src-dependent manner. Interacts with ITGB1BP1 (via N-terminus and PTB domain). Interacts with RHOA (activated by GTP), RHOB, RHOC and PPP1R12A. Interacts with SHROOM3. The cofactor is Mg(2+). Post-translationally, autophosphorylated on serine and threonine residues. Cleaved by caspase-3 during apoptosis. This leads to constitutive activation of the kinase and membrane blebbing. As to expression, highly expressed in brain, spleen, lung, liver, skeletal muscle, kidney and testis.

The protein resides in the cytoplasm. It localises to the cytoskeleton. It is found in the microtubule organizing center. Its subcellular location is the centrosome. The protein localises to the centriole. The protein resides in the golgi apparatus membrane. It localises to the cell projection. It is found in the bleb. Its subcellular location is the cell membrane. The protein localises to the lamellipodium. The protein resides in the ruffle. It carries out the reaction L-seryl-[protein] + ATP = O-phospho-L-seryl-[protein] + ADP + H(+). The catalysed reaction is L-threonyl-[protein] + ATP = O-phospho-L-threonyl-[protein] + ADP + H(+). Its activity is regulated as follows. Activated by RHOA binding. Inhibited by Y-27632. In terms of biological role, protein kinase which is a key regulator of the actin cytoskeleton and cell polarity. Involved in regulation of smooth muscle contraction, actin cytoskeleton organization, stress fiber and focal adhesion formation, neurite retraction, cell adhesion and motility via phosphorylation of DAPK3, GFAP, LIMK1, LIMK2, MYL9/MLC2, TPPP, PFN1 and PPP1R12A. Phosphorylates FHOD1 and acts synergistically with it to promote SRC-dependent non-apoptotic plasma membrane blebbing. Phosphorylates JIP3 and regulates the recruitment of JNK to JIP3 upon UVB-induced stress. Acts as a suppressor of inflammatory cell migration by regulating PTEN phosphorylation and stability. Acts as a negative regulator of VEGF-induced angiogenic endothelial cell activation. Required for centrosome positioning and centrosome-dependent exit from mitosis. Plays a role in terminal erythroid differentiation. Inhibits podocyte motility via regulation of actin cytoskeletal dynamics and phosphorylation of CFL1. Promotes keratinocyte terminal differentiation. Involved in osteoblast compaction through the fibronectin fibrillogenesis cell-mediated matrix assembly process, essential for osteoblast mineralization. May regulate closure of the eyelids and ventral body wall by inducing the assembly of actomyosin bundles. The protein is Rho-associated protein kinase 1 (Rock1) of Rattus norvegicus (Rat).